Here is a 308-residue protein sequence, read N- to C-terminus: 15-cis-phytoene synthase (308 aa).

The protein belongs to the phytoene/squalene synthase family. ATP serves as cofactor. Mn(2+) is required as a cofactor. Requires Mg(2+) as cofactor.

It carries out the reaction 2 (2E,6E,10E)-geranylgeranyl diphosphate = 15-cis-phytoene + 2 diphosphate. It functions in the pathway carotenoid biosynthesis; phytoene biosynthesis. Involved in the biosynthesis of carotenoids. Catalyzes the condensation of two molecules of geranylgeranyl diphosphate (GGPP) to give prephytoene diphosphate (PPPP) and the subsequent rearrangement of the cyclopropylcarbinyl intermediate to yield 15-cis-phytoene. This Synechococcus elongatus (strain ATCC 33912 / PCC 7942 / FACHB-805) (Anacystis nidulans R2) protein is 15-cis-phytoene synthase (crtB).